Reading from the N-terminus, the 98-residue chain is Tax1-binding protein 3 (98 aa).

N-acetylserine is present on serine 2. Residues 12–87 enclose the PDZ domain; it reads VVQRVEIHKL…VVRLLVTRQS (76 aa).

Interacts (via its PDZ domain) with GLS2. Interacts (via its PDZ domain) with RTKN (via the C-terminal region); this interaction facilitates Rho-mediated activation of the FOS serum response element (SRE). Interacts (via PDZ domain) with ARHGEF16. Interacts (via PDZ domain) with KCNJ4 (via C-terminus). Competes with LIN7A for KCNJ4 binding. Interacts (via its PDZ domain) with CTNNB1; this interaction inhibits the transcriptional activity of CTNNB1. Interacts with ADGRB2. In terms of tissue distribution, detected in kidney distal convoluted tubules (at protein level).

Its subcellular location is the cytoplasm. It is found in the nucleus. The protein localises to the cell membrane. May regulate a number of protein-protein interactions by competing for PDZ domain binding sites. Binds CTNNB1 and may thereby act as an inhibitor of the Wnt signaling pathway. Competes with LIN7A for KCNJ4 binding, and thereby promotes KCNJ4 internalization. May play a role in the Rho signaling pathway. This is Tax1-binding protein 3 from Rattus norvegicus (Rat).